The primary structure comprises 377 residues: MSNSIVIIGSGFAARQLVKNIRKQDASIPLTLIAADSMDEYNKPDLSHVISQGQRADDLTRQTAGEFAEQFNLRLFPHTWVTDIDAEAHVVKSQNNQWQYDKLVLATGASAFVPPVPGRELMLTLNSQQEYRACETQLRDARRVLIVGGGLIGSELAMDFCRAGKAVTLIDNAASILASLMPPEVSSRLQHRLTEMGVHLLLKSQLQGLEKTDSGILATLECQRCIEVDAVIAATGLRPETALARRAGLTINRGVCVDSYLQTSNADIYALGDCAEINGQVLPFLQPIQLSAMVLAKNLLGNNTPLKLPAMLVKIKTPELPLHLAGETQRQDLRWQINTERQGMVARGVDDADQLRAFVVSEDRMKEAFGLLKTLPM.

Belongs to the FAD-dependent oxidoreductase family. Requires FAD as cofactor.

It is found in the cytoplasm. The catalysed reaction is 2 reduced [nitric oxide reductase rubredoxin domain] + NAD(+) + H(+) = 2 oxidized [nitric oxide reductase rubredoxin domain] + NADH. The protein operates within nitrogen metabolism; nitric oxide reduction. Its function is as follows. One of at least two accessory proteins for anaerobic nitric oxide (NO) reductase. Reduces the rubredoxin moiety of NO reductase. This Escherichia coli (strain SMS-3-5 / SECEC) protein is Nitric oxide reductase FlRd-NAD(+) reductase.